We begin with the raw amino-acid sequence, 327 residues long: DNA polymerase III subunit delta' (327 aa).

DNA polymerase III contains a core (composed of alpha, epsilon and theta chains) that associates with a tau subunit. This core dimerizes to form the POLIII' complex. PolIII' associates with the gamma complex (composed of gamma, delta, delta', psi and chi chains) and with the beta chain to form the complete DNA polymerase III complex.

The enzyme catalyses DNA(n) + a 2'-deoxyribonucleoside 5'-triphosphate = DNA(n+1) + diphosphate. Its function is as follows. DNA polymerase III is a complex, multichain enzyme responsible for most of the replicative synthesis in bacteria. This DNA polymerase also exhibits 3' to 5' exonuclease activity. The sequence is that of DNA polymerase III subunit delta' (holB) from Haemophilus influenzae (strain ATCC 51907 / DSM 11121 / KW20 / Rd).